A 272-amino-acid polypeptide reads, in one-letter code: D-aminoacyl-tRNA deacylase (272 aa).

Belongs to the DtdA deacylase family. Monomer. Requires Zn(2+) as cofactor.

The enzyme catalyses a D-aminoacyl-tRNA + H2O = a tRNA + a D-alpha-amino acid + H(+). It catalyses the reaction glycyl-tRNA(Ala) + H2O = tRNA(Ala) + glycine + H(+). Its function is as follows. D-aminoacyl-tRNA deacylase with broad substrate specificity. By recycling D-aminoacyl-tRNA to D-amino acids and free tRNA molecules, this enzyme counteracts the toxicity associated with the formation of D-aminoacyl-tRNA entities in vivo. The sequence is that of D-aminoacyl-tRNA deacylase from Thermococcus onnurineus (strain NA1).